Consider the following 107-residue polypeptide: MRVFQIVYILIISNLIYATSGGGTSSHHHKNDNNIADNTNNNNNNNNNNNNNNITNATTTRTVTTSTKTKTHTGGGVAAMGGILGQNGWFYGDAGLMAAIFGAMLLL.

A signal peptide spans 1-18; the sequence is MRVFQIVYILIISNLIYA. Positions 26–56 are disordered; that stretch reads SHHHKNDNNIADNTNNNNNNNNNNNNNNITN. Residues 33–56 show a composition bias toward low complexity; sequence NNIADNTNNNNNNNNNNNNNNITN. N-linked (GlcNAc...) asparagine glycans are attached at residues Asn-53 and Asn-56. Gly-76 is lipidated: GPI-anchor amidated glycine. The propeptide at 77–107 is removed in mature form; sequence VAAMGGILGQNGWFYGDAGLMAAIFGAMLLL.

It is found in the cell membrane. In terms of biological role, cell surface GPI-anchored protein required for virulence. Mediates hyphal ramification which is important for the interaction with host cells. The protein is Virulence factor PGA16 (PGA16) of Candida albicans (strain SC5314 / ATCC MYA-2876) (Yeast).